The primary structure comprises 190 residues: Subtilisin inhibitor CLSI-II (190 aa).

Intrachain disulfides connect C44-C88 and C142-C149.

The protein belongs to the protease inhibitor I3 (leguminous Kunitz-type inhibitor) family. Forms active dimers on storage in aqueous solution, possibly through formation of an intermolecular disulfide bond. Post-translationally, the N-terminal Asn is removed in about 50% of both the CLSI-II and CLSI-III chains.

The protein resides in the secreted. Inhibits subtilisin-type microbial serine proteases incuding proteinase K, subtilisin BPN', subtilisin Carlsberg and subtilisin E in a non-stoichiometric manner. Weakly inhibits A.oryzae protease and some metalloproteases including pronase E. Does not inhibit trypsin, chymotrypsin, S.griseus alkaline protease or A.lyticus lysyl endopeptidase. CLSI-II has a wider inhibitory specificity than CLSI-III. This Canavalia lineata (Beach bean) protein is Subtilisin inhibitor CLSI-II.